The following is a 115-amino-acid chain: NADH-ubiquinone oxidoreductase chain 3 (115 aa).

3 helical membrane-spanning segments follow: residues 4 to 24 (MLILLMNIALAAILISLAFWL), 55 to 75 (FFLVAITFLLFDLEIALLLPL), and 86 to 106 (MLMTMAFILITILALGLAYEW).

This sequence belongs to the complex I subunit 3 family. In terms of assembly, core subunit of respiratory chain NADH dehydrogenase (Complex I) which is composed of 45 different subunits. Interacts with TMEM186. Interacts with TMEM242.

The protein resides in the mitochondrion inner membrane. The enzyme catalyses a ubiquinone + NADH + 5 H(+)(in) = a ubiquinol + NAD(+) + 4 H(+)(out). In terms of biological role, core subunit of the mitochondrial membrane respiratory chain NADH dehydrogenase (Complex I) which catalyzes electron transfer from NADH through the respiratory chain, using ubiquinone as an electron acceptor. Essential for the catalytic activity of complex I. This Microtus pennsylvanicus (Meadow vole) protein is NADH-ubiquinone oxidoreductase chain 3.